The sequence spans 313 residues: MSPASPTFFCIGLCVLQVIQTQSGPLPKPSLQAQPSSLVPLGQSVILRCQGPPDVDLYRLEKLKPEKYEDQDFLFIPTMERSNAGRYRCSYQNGSHWSLPSDQLELIATGVYAKPSLSAHPSSAVPQGRDVTLKCQSPYSFDEFVLYKEGDTGSYKRPEKWYRANFPIITVTAAHSGTYRCYSFSSSSPYLWSAPSDPLVLVVTGLSATPSQVPTEESFPVTESSRRPSILPTNKISTTEKPMNITASPEGLSPPFGFAHQHYAKGNLVRICLGATIIIILLGLLAEDWHSRKKCLQHRMRALQRPLPPLPLA.

The first 21 residues, 1 to 21, serve as a signal peptide directing secretion; that stretch reads MSPASPTFFCIGLCVLQVIQT. At 22 to 265 the chain is on the extracellular side; that stretch reads QSGPLPKPSL…FGFAHQHYAK (244 aa). Ig-like C2-type domains follow at residues 27–105 and 115–197; these read PKPS…DQLE and PSLS…APSD. The cysteines at positions 49 and 89 are disulfide-linked. Residue Asn-93 is glycosylated (N-linked (GlcNAc...) asparagine). Cysteines 135 and 181 form a disulfide. Residues 213–236 are disordered; the sequence is VPTEESFPVTESSRRPSILPTNKI. N-linked (GlcNAc...) asparagine glycosylation is present at Asn-244. A helical transmembrane segment spans residues 266-286; sequence GNLVRICLGATIIIILLGLLA. The Cytoplasmic segment spans residues 287-313; that stretch reads EDWHSRKKCLQHRMRALQRPLPPLPLA.

Associated with Fc receptor gamma chain. The GPVI:FcRgamma complex is associated with the Src kinase family FYN and LYN. Interacts with TRAF4. Interacts with COL1A1, but not with COL4A4. As to expression, megakaryocytes and platelets.

It localises to the cell membrane. Its function is as follows. Collagen receptor involved in collagen-induced platelet adhesion and activation. Plays a key role in platelet procoagulant activity and subsequent thrombin and fibrin formation. This procoagulant function may contribute to arterial and venous thrombus formation. The signaling pathway involves the FcR gamma-chain, the Src kinases (likely FYN or LYN) and SYK, the adapter protein LAT and leads to the activation of PLCG2. This chain is Platelet glycoprotein VI, found in Mus musculus (Mouse).